We begin with the raw amino-acid sequence, 285 residues long: Cytosolic Fe-S cluster assembly factor CFD1 (285 aa).

30-37 (GKGGVGKS) lines the ATP pocket. The [4Fe-4S] cluster site is built by Cys-206 and Cys-209.

Belongs to the Mrp/NBP35 ATP-binding proteins family. NUBP2/CFD1 subfamily. In terms of assembly, heterotetramer of 2 NBP35 and 2 CFD1 chains. [4Fe-4S] cluster is required as a cofactor.

The protein localises to the cytoplasm. In terms of biological role, component of the cytosolic iron-sulfur (Fe/S) protein assembly (CIA) machinery. Required for maturation of extramitochondrial Fe-S proteins. The NBP35-CFD1 heterotetramer forms a Fe-S scaffold complex, mediating the de novo assembly of an Fe-S cluster and its transfer to target apoproteins. Required for biogenesis and export of both ribosomal subunits, which may reflect a role in assembly of the Fe/S clusters in RLI1, a protein which performs rRNA processing and ribosome export. In Candida glabrata (strain ATCC 2001 / BCRC 20586 / JCM 3761 / NBRC 0622 / NRRL Y-65 / CBS 138) (Yeast), this protein is Cytosolic Fe-S cluster assembly factor CFD1.